A 1456-amino-acid polypeptide reads, in one-letter code: Leucine-rich repeat-containing protein 9 (1456 aa).

8 LRR repeats span residues 53–78 (FHNLSSLTIVAQDIREISGLETCLQL), 97–119 (CRNLEKLYLYYNKISKIENLEKL), 120–141 (IKLEVLWLNHNMIKNIEGLQTL), 142–164 (KNLKDLNLAGNLVSSIGRCLDPN), 166–188 (QLEKLNLSGNQITSFKDLTNLTK), 190–212 (TRLKDLCLNDPQYKSNPVCQLCN), 224–248 (LQRLDTFDVSAKQIKELADSTAMKK), and 264–287 (NEELEKLNDRKCKLQKLPEERIKL). The tract at residues 305–325 (SSKGQSDTTPEAEKPRNSEVV) is disordered. An LRR 9 repeat occupies 339 to 362 (LSALDDRVTFWNKKLHEIEAIYRT). Tyr-525 carries the post-translational modification Phosphotyrosine. LRR repeat units follow at residues 661–683 (KPRPKLISLDEKTIISLAKTNIY), 684–705 (SHIVNLNLHGNSLSKLRDLAKL), 706–727 (TGLRKLNISFNEFTCLDDVYHL), 729–748 (NLEYLDASHNHVITLEGFRG), 749–772 (LMKLKHLDLSWNQLKKTGEEINVL), 776–802 (TTSLLTLDIQHNPWQKPATLRLSVIGR), 806–833 (LTHLDGLVISEEETRAALKFISGTKITQ), 876–898 (YSKITALNLDGQHLFEITNLEKL), 899–920 (ENLKWASFSNNNLSKMEGLESC), 921–942 (VNLEELTLDGNCISKIEGITRL), 943–965 (TKLSRLSMNNNLLTGLEKHTFDN), 967–991 (LHLHSLSLENNRITSLSALQKTFTL), 993–1010 (ELYISNNYIAVNQEIYNL), 1013–1037 (LCNLVILDMYGNIIIWNQENYRFFV), 1082–1105 (FIQMQELNWTSSAIRTVDLIPVDH), 1106–1128 (FRNVSNVNLQNNNLTSFSGLIYL), 1129–1151 (PNVKVLCLNYNHIESIMPRLKPQ), 1191–1214 (MQSLEVLHLGYNGICNLVQLQLNR), 1215–1237 (LRNLKFLFLQGNEISQVEGLDNL), 1238–1260 (IVLQELVVDHNRIRAFNDTAFSK), 1262–1283 (SSLLMLHLEENRLRELSKLQSL), 1284–1307 (VKLEKLFLGYNKIQDITELEKLDV), and 1309–1335 (PSLRELTVYGNPICRKMVHRHVLIFRL).

This is Leucine-rich repeat-containing protein 9 (Lrrc9) from Mus musculus (Mouse).